The following is a 261-amino-acid chain: tRNA pseudouridine synthase A (261 aa).

The Nucleophile role is filled by D51. Y109 contacts substrate.

Belongs to the tRNA pseudouridine synthase TruA family. In terms of assembly, homodimer.

It catalyses the reaction uridine(38/39/40) in tRNA = pseudouridine(38/39/40) in tRNA. Functionally, formation of pseudouridine at positions 38, 39 and 40 in the anticodon stem and loop of transfer RNAs. This is tRNA pseudouridine synthase A from Shewanella pealeana (strain ATCC 700345 / ANG-SQ1).